Reading from the N-terminus, the 1165-residue chain is Chromosome partition protein Smc (1165 aa).

An ATP-binding site is contributed by 32 to 39 (PNGSGKSN). The stretch at 161–503 (AGVAEFDRKI…ETQRQVWREA (343 aa)) forms a coiled coil. The SMC hinge domain occupies 518-630 (QGVHGLISQL…VFRSLELARR (113 aa)). Coiled-coil stretches lie at residues 672–901 (ELAE…LQQR) and 946–1010 (DLSL…DCDT).

The protein belongs to the SMC family. In terms of assembly, homodimer.

The protein resides in the cytoplasm. In terms of biological role, required for chromosome condensation and partitioning. The sequence is that of Chromosome partition protein Smc from Gloeobacter violaceus (strain ATCC 29082 / PCC 7421).